Here is a 379-residue protein sequence, read N- to C-terminus: Putative nickel insertion protein (379 aa).

Belongs to the LarC family.

The polypeptide is Putative nickel insertion protein (Methanocaldococcus jannaschii (strain ATCC 43067 / DSM 2661 / JAL-1 / JCM 10045 / NBRC 100440) (Methanococcus jannaschii)).